The following is a 404-amino-acid chain: Probable tRNA sulfurtransferase (404 aa).

The 106-residue stretch at 60–165 (QPIVEALKLV…DEAAYISYEE (106 aa)) folds into the THUMP domain. ATP-binding positions include 183–184 (ML), 208–209 (HF), Arg-265, Gly-287, and Gln-296.

The protein belongs to the ThiI family.

The protein resides in the cytoplasm. It catalyses the reaction [ThiI sulfur-carrier protein]-S-sulfanyl-L-cysteine + a uridine in tRNA + 2 reduced [2Fe-2S]-[ferredoxin] + ATP + H(+) = [ThiI sulfur-carrier protein]-L-cysteine + a 4-thiouridine in tRNA + 2 oxidized [2Fe-2S]-[ferredoxin] + AMP + diphosphate. It carries out the reaction [ThiS sulfur-carrier protein]-C-terminal Gly-Gly-AMP + S-sulfanyl-L-cysteinyl-[cysteine desulfurase] + AH2 = [ThiS sulfur-carrier protein]-C-terminal-Gly-aminoethanethioate + L-cysteinyl-[cysteine desulfurase] + A + AMP + 2 H(+). Its pathway is cofactor biosynthesis; thiamine diphosphate biosynthesis. Its function is as follows. Catalyzes the ATP-dependent transfer of a sulfur to tRNA to produce 4-thiouridine in position 8 of tRNAs, which functions as a near-UV photosensor. Also catalyzes the transfer of sulfur to the sulfur carrier protein ThiS, forming ThiS-thiocarboxylate. This is a step in the synthesis of thiazole, in the thiamine biosynthesis pathway. The sulfur is donated as persulfide by IscS. This Streptococcus pyogenes serotype M12 (strain MGAS2096) protein is Probable tRNA sulfurtransferase.